Consider the following 660-residue polypeptide: Epithelial sodium channel subunit gamma (660 aa).

Topologically, residues 1 to 55 (MSKSGKKLTQKLKKNLPVTGPQAPTLYELMQWYCLNTNTHGCRRIVVSKGRLRRW) are cytoplasmic. The helical transmembrane segment at 56–76 (IWISLTLCAVAVIFWQCALLL) threads the bilayer. Residues 77–537 (MSYYSVSASI…VTLLSNFGGQ (461 aa)) are Extracellular-facing. Intrachain disulfides connect C101–C286, C209–C217, C263–C270, C375–C460, C397–C456, C401–C452, C410–C437, and C412–C426. Residues 538–558 (LGLWMSCSMICVLEIIEVFFI) form a helical membrane-spanning segment. Over 559–660 (DSFWVVLRQR…IDSDEDVERL (102 aa)) the chain is Cytoplasmic.

This sequence belongs to the amiloride-sensitive sodium channel (TC 1.A.6) family. SCNN1G subfamily. Component of the heterotrimeric epithelial sodium channel (ENaC) composed of an alpha/SCNN1A, a beta/SCNN1B and a gamma/SCNN1G subunit.

It is found in the apical cell membrane. It catalyses the reaction Na(+)(in) = Na(+)(out). Its activity is regulated as follows. Originally identified and characterized by its inhibition by the diuretic drug amiloride. This is one of the three pore-forming subunits of the heterotrimeric epithelial sodium channel (ENaC), a critical regulator of sodium balance and fluid homeostasis. ENaC operates in epithelial tissues, where it mediates the electrodiffusion of sodium ions from extracellular fluid through the apical membrane of cells, with water following osmotically. This Xenopus laevis (African clawed frog) protein is Epithelial sodium channel subunit gamma (scnn1g-a).